The sequence spans 501 residues: 2-isopropylmalate synthase (501 aa).

Residues 7 to 269 enclose the Pyruvate carboxyltransferase domain; it reads VRIFDTTLRD…QTQIKTEEIA (263 aa). The Mn(2+) site is built by Asp16, His204, His206, and Asn240. Residues 394-501 are regulatory domain; that stretch reads QLEGFTVSTG…RAYISALNRL (108 aa).

This sequence belongs to the alpha-IPM synthase/homocitrate synthase family. LeuA type 1 subfamily. As to quaternary structure, homodimer. Mn(2+) serves as cofactor.

It localises to the cytoplasm. It carries out the reaction 3-methyl-2-oxobutanoate + acetyl-CoA + H2O = (2S)-2-isopropylmalate + CoA + H(+). The protein operates within amino-acid biosynthesis; L-leucine biosynthesis; L-leucine from 3-methyl-2-oxobutanoate: step 1/4. Functionally, catalyzes the condensation of the acetyl group of acetyl-CoA with 3-methyl-2-oxobutanoate (2-ketoisovalerate) to form 3-carboxy-3-hydroxy-4-methylpentanoate (2-isopropylmalate). The protein is 2-isopropylmalate synthase of Leptospira interrogans serogroup Icterohaemorrhagiae serovar copenhageni (strain Fiocruz L1-130).